The primary structure comprises 388 residues: Putrescine N-methyltransferase 1 (388 aa).

3 stretches are compositionally biased toward polar residues: residues 1-14 (MEVI…STIF), 23-39 (GYQN…QNGT), and 46-88 (HQNG…GNEL). The interval 1–88 (MEVISTNTNG…TISHDNGNEL (88 aa)) is disordered. In terms of domain architecture, PABS spans 99-336 (PGWFSEFSAL…GVIGYMLCST (238 aa)). Residues Q130, E205, and 236 to 237 (DG) contribute to the S-adenosyl-L-methionine site. D255 acts as the Proton acceptor in catalysis. An S-adenosyl-L-methionine-binding site is contributed by Y324.

This sequence belongs to the class I-like SAM-binding methyltransferase superfamily. Spermidine/spermine synthase family. As to expression, mainly expressed in roots.

It catalyses the reaction putrescine + S-adenosyl-L-methionine = N-methylputrescine + S-adenosyl-L-homocysteine + H(+). It participates in alkaloid biosynthesis; nicotine biosynthesis. Functionally, involved in the biosynthesis of pyridine alkaloid natural products, leading mainly to the production of anabasine, anatabine, nicotine and nornicotine, effective deterrents against herbivores with antiparasitic and pesticide properties (neurotoxins); nornicotine serves as the precursor in the synthesis of the carcinogen compound N'-nitrosonornicotine (NNN). Methyltransferase that mediates the conversion of putrescine to N-methylputrescine. This is Putrescine N-methyltransferase 1 from Nicotiana attenuata (Coyote tobacco).